The sequence spans 448 residues: uncharacterized protein (448 aa).

Residues S187–G198 are compositionally biased toward basic and acidic residues. Disordered stretches follow at residues S187–R221, L243–M270, and L291–G361. Over residues L243–S261 the composition is skewed to low complexity. Positions F307–R334 are enriched in basic and acidic residues.

It to M.tuberculosis Rv0025 and Rv0739.

This is an uncharacterized protein from Mycobacterium tuberculosis (strain CDC 1551 / Oshkosh).